Reading from the N-terminus, the 366-residue chain is C-X-C chemokine receptor type 3 (366 aa).

Over 1-55 (MVPEMSERQEFQASEFAYLLENSSYDYGENETYFCCTSPPCPQDFSLNFDRTFLP) the chain is Extracellular. Asparagine 22 carries an N-linked (GlcNAc...) asparagine glycan. Tyrosine 25 and tyrosine 27 each carry sulfotyrosine. A glycan (N-linked (GlcNAc...) asparagine) is linked at asparagine 30. Residues 56–76 (VLYSLLFVLGLLGNGVVAVVL) form a helical membrane-spanning segment. Residues 77–88 (LSQRAALSSTDT) lie on the Cytoplasmic side of the membrane. The chain crosses the membrane as a helical span at residues 89 to 109 (FLLHLAVADALLVLTLPLWAV). The Extracellular portion of the chain corresponds to 110–124 (DAAIQWVFGSGLCKV). Cysteines 122 and 201 form a disulfide. A helical membrane pass occupies residues 125–145 (AGALFNINFYAGALLLACISF). Topologically, residues 146-167 (DRYLSIVHATQFYRRGPPARVA) are cytoplasmic. A helical transmembrane segment spans residues 168-188 (LTCVAVWGLCLLFALPDFIFL). Topologically, residues 189–221 (SSHHDNRLNATHCQYNFPQEGRTALRVLQLVAG) are extracellular. Residue asparagine 197 is glycosylated (N-linked (GlcNAc...) asparagine). Residues 222–242 (FLLPLLVMAYCYARILTVLLV) traverse the membrane as a helical segment. The Cytoplasmic portion of the chain corresponds to 243–254 (SRGQRRLRAMRL). The helical transmembrane segment at 255–275 (VVVVVVAFALCWTPYHLVVLV) threads the bilayer. At 276-299 (DTLMDLGALARNCGRESRVDVAKS) the chain is on the extracellular side. A helical transmembrane segment spans residues 300–320 (VTSGMGYMHCCLNPLLYAFVG). Residues 321–366 (VKFRERMWVLLMRLGCPDQRGHQRQPSASRRDSSWSETTEASYSGL) are Cytoplasmic-facing. The disordered stretch occupies residues 339–366 (QRGHQRQPSASRRDSSWSETTEASYSGL). Over residues 355–366 (WSETTEASYSGL) the composition is skewed to polar residues.

It belongs to the G-protein coupled receptor 1 family. In terms of assembly, homomer. Forms heteromers with ACKR4. Interacts with PF4/CXCL4. Sulfation on Tyr-25 and Tyr-27 is essential for CXCL10 binding. Post-translationally, N-glycosylated.

It localises to the cell membrane. Functionally, receptor for the C-X-C chemokine CXCL9, CXCL10 and CXCL11 and mediates the proliferation, survival and angiogenic activity of mesangial cells through a heterotrimeric G-protein signaling pathway. Probably promotes cell chemotaxis response. Binds to CCL21. Upon activation by PF4, induces activated T-lymphocytes migration mediated via downstream Ras/extracellular signal-regulated kinase (ERK) signaling. The protein is C-X-C chemokine receptor type 3 (CXCR3) of Capra hircus (Goat).